The sequence spans 66 residues: KEGYIVNHSTGCKYECYKLGDNDYCLRECKAQYGKGAGGYCYAFGCWCTHLYEQAVVWPLPKKTCN.

Residues 1 to 66 (KEGYIVNHST…VWPLPKKTCN (66 aa)) enclose the LCN-type CS-alpha/beta domain. 4 disulfide bridges follow: cysteine 12–cysteine 65, cysteine 16–cysteine 41, cysteine 25–cysteine 46, and cysteine 29–cysteine 48.

It belongs to the long (4 C-C) scorpion toxin superfamily. Sodium channel inhibitor family. Beta subfamily. As to expression, expressed by the venom gland.

It is found in the secreted. Inhibited by human antibodies scFvs 10FG2 and LR. In terms of biological role, beta toxins bind voltage-independently at site-4 of sodium channels (Nav) and reduces peak current and shifts the voltage of activation toward more negative potentials thereby affecting sodium channel activation and promoting spontaneous and repetitive firing. Has an inhibitory effect on voltage-gated sodium channel hNav1.6/SCN8A, affecting both the activation and inactivation processes. This toxin is active against mammals and lethal to mice. The chain is Beta-toxin Cb1 from Centruroides baergi (Scorpion).